The chain runs to 251 residues: Uridylate kinase (251 aa).

ATP is bound at residue 24-27 (KISG). Positions 32–37 (GDQGFG) are involved in allosteric activation by GTP. Residue glycine 66 participates in UMP binding. Residues glycine 67 and arginine 71 each contribute to the ATP site. UMP is bound by residues aspartate 86 and 147–154 (TGNPYFTT). Asparagine 175, tyrosine 181, and aspartate 184 together coordinate ATP.

The protein belongs to the UMP kinase family. Homohexamer.

The protein resides in the cytoplasm. The enzyme catalyses UMP + ATP = UDP + ADP. Its pathway is pyrimidine metabolism; CTP biosynthesis via de novo pathway; UDP from UMP (UMPK route): step 1/1. Its activity is regulated as follows. Allosterically activated by GTP. Inhibited by UTP. Functionally, catalyzes the reversible phosphorylation of UMP to UDP. The protein is Uridylate kinase of Ruegeria pomeroyi (strain ATCC 700808 / DSM 15171 / DSS-3) (Silicibacter pomeroyi).